Consider the following 107-residue polypeptide: Flagellar hook-basal body complex protein FliE (107 aa).

It belongs to the FliE family.

Its subcellular location is the bacterial flagellum basal body. The polypeptide is Flagellar hook-basal body complex protein FliE (Mesorhizobium japonicum (strain LMG 29417 / CECT 9101 / MAFF 303099) (Mesorhizobium loti (strain MAFF 303099))).